The chain runs to 381 residues: Protein-glutamate methylesterase/protein-glutamine glutaminase (381 aa).

Residues 20–138 (RVMVVDDSVV…EIAAADIFKH (119 aa)) form the Response regulatory domain. A 4-aspartylphosphate modification is found at Asp-71. The interval 154–176 (PAALASAREPEPRPIQATPVPAH) is disordered. The region spanning 183-373 (PFSTHAPRAL…PLQQIAPKLV (191 aa)) is the CheB-type methylesterase domain. Active-site residues include Ser-197, His-225, and Asp-321.

Belongs to the CheB family. Post-translationally, phosphorylated by CheA. Phosphorylation of the N-terminal regulatory domain activates the methylesterase activity.

The protein localises to the cytoplasm. It catalyses the reaction [protein]-L-glutamate 5-O-methyl ester + H2O = L-glutamyl-[protein] + methanol + H(+). The enzyme catalyses L-glutaminyl-[protein] + H2O = L-glutamyl-[protein] + NH4(+). Involved in chemotaxis. Part of a chemotaxis signal transduction system that modulates chemotaxis in response to various stimuli. Catalyzes the demethylation of specific methylglutamate residues introduced into the chemoreceptors (methyl-accepting chemotaxis proteins or MCP) by CheR. Also mediates the irreversible deamidation of specific glutamine residues to glutamic acid. This Nitrobacter hamburgensis (strain DSM 10229 / NCIMB 13809 / X14) protein is Protein-glutamate methylesterase/protein-glutamine glutaminase.